A 179-amino-acid chain; its full sequence is MEKIIIDHDRFLRTISRISHEIIEKHQTLDDLVIVGIKRRGAEIAELLQRRVEELSSINLPSMELDITFYRDDLTLVDQEDKMPVYSGSSQYLNIQDKTVILVDDVLFTGRTIRAAMDALTDFGRAAKIELVIFVDRGHRELPIRADYVGKNVPTSRDELVQVRTEKQDGCYEVAILGK.

Residues 39-40 (RR), 104-112 (DDVLFTGRT), R137, and V161 each bind substrate. A PRPP-binding motif is present at residues 100 to 112 (VILVDDVLFTGRT).

This sequence belongs to the purine/pyrimidine phosphoribosyltransferase family. PyrR subfamily.

The catalysed reaction is UMP + diphosphate = 5-phospho-alpha-D-ribose 1-diphosphate + uracil. Functionally, regulates the transcription of the pyrimidine nucleotide (pyr) operon in response to exogenous pyrimidines. In terms of biological role, also displays a weak uracil phosphoribosyltransferase activity which is not physiologically significant. This Haemophilus influenzae (strain ATCC 51907 / DSM 11121 / KW20 / Rd) protein is Bifunctional protein PyrR (pyrR).